A 189-amino-acid chain; its full sequence is Large ribosomal subunit protein bL9 (189 aa).

The protein belongs to the bacterial ribosomal protein bL9 family.

Binds to the 23S rRNA. The protein is Large ribosomal subunit protein bL9 of Brucella canis (strain ATCC 23365 / NCTC 10854 / RM-666).